The following is a 491-amino-acid chain: Ketol-acid reductoisomerase (NADP(+)) (491 aa).

In terms of domain architecture, KARI N-terminal Rossmann spans 15–208; that stretch reads AQLGKCRFMG…GGHRAGVLES (194 aa). Residues 45–48, Arg68, Arg76, Ser78, and 108–110 contribute to the NADP(+) site; these read CGAQ and DKQ. Residue His132 is part of the active site. An NADP(+)-binding site is contributed by Gly158. KARI C-terminal knotted domains are found at residues 209–344 and 345–484; these read SFVA…TAPQ and YEGK…MTDM. Mg(2+) contacts are provided by Asp217, Glu221, Glu389, and Glu393. Ser414 contacts substrate.

Belongs to the ketol-acid reductoisomerase family. Mg(2+) is required as a cofactor.

It catalyses the reaction (2R)-2,3-dihydroxy-3-methylbutanoate + NADP(+) = (2S)-2-acetolactate + NADPH + H(+). The catalysed reaction is (2R,3R)-2,3-dihydroxy-3-methylpentanoate + NADP(+) = (S)-2-ethyl-2-hydroxy-3-oxobutanoate + NADPH + H(+). The protein operates within amino-acid biosynthesis; L-isoleucine biosynthesis; L-isoleucine from 2-oxobutanoate: step 2/4. It participates in amino-acid biosynthesis; L-valine biosynthesis; L-valine from pyruvate: step 2/4. In terms of biological role, involved in the biosynthesis of branched-chain amino acids (BCAA). Catalyzes an alkyl-migration followed by a ketol-acid reduction of (S)-2-acetolactate (S2AL) to yield (R)-2,3-dihydroxy-isovalerate. In the isomerase reaction, S2AL is rearranged via a Mg-dependent methyl migration to produce 3-hydroxy-3-methyl-2-ketobutyrate (HMKB). In the reductase reaction, this 2-ketoacid undergoes a metal-dependent reduction by NADPH to yield (R)-2,3-dihydroxy-isovalerate. The sequence is that of Ketol-acid reductoisomerase (NADP(+)) from Escherichia coli (strain UTI89 / UPEC).